The chain runs to 226 residues: N-acetyltransferase family 8 member 2 (226 aa).

Helical transmembrane passes span 33–55 (FYHVLTLPHSLLLFPGVPVTIIL) and 60–82 (WLLATVYSFLFLLCLRLIFWVSC). The 153-residue stretch at 69–221 (LFLLCLRLIF…FHFTYSLPSV (153 aa)) folds into the N-acetyltransferase domain. Residue lysine 204 is modified to N6-acetyllysine.

This sequence belongs to the camello family.

It is found in the membrane. Probable acetyltransferase. Has no detectable histone acetyltransferase activity towards histone H3 or H4. This chain is N-acetyltransferase family 8 member 2, found in Rattus norvegicus (Rat).